Here is a 109-residue protein sequence, read N- to C-terminus: Mitochondrial import receptor subunit TOM22 homolog (109 aa).

The Cytoplasmic portion of the chain corresponds to 1-60 (MALVRDDFDDIPDSEIHETIVERIEGLGEMFPDALRSAVHSTVDWSIWGVKGVFSLTKST). A helical membrane pass occupies residues 61-77 (IWVVSTTSLIAFLPYII). Residues 78 to 109 (EKERSDLEKTQVAQQRQMLLGPSAAIQQAKTA) are Mitochondrial intermembrane-facing.

Belongs to the Tom22 family. Forms part of the preprotein translocase complex of the outer mitochondrial membrane (TOM complex).

The protein resides in the mitochondrion outer membrane. Its function is as follows. Central receptor component of the translocase of the outer membrane of mitochondria (TOM complex) responsible for the recognition and translocation of cytosolically synthesized mitochondrial preproteins. Together with the peripheral receptor tomm-20 functions as the transit peptide receptor and facilitates the movement of preproteins into the translocation pore. This is Mitochondrial import receptor subunit TOM22 homolog from Caenorhabditis elegans.